The chain runs to 310 residues: Glutaminase 1 (310 aa).

Substrate-binding residues include serine 66, asparagine 117, glutamate 161, asparagine 168, tyrosine 192, tyrosine 244, and valine 262. Residue lysine 294 is modified to N6-acetyllysine.

Belongs to the glutaminase family. In terms of assembly, homotetramer.

The enzyme catalyses L-glutamine + H2O = L-glutamate + NH4(+). The protein is Glutaminase 1 of Escherichia coli (strain K12).